The chain runs to 470 residues: Beta-Ala-Xaa dipeptidase (470 aa).

Position 87 (His87) interacts with Zn(2+). Asp89 is a catalytic residue. Zn(2+) is bound at residue Asp119. Glu153 acts as the Proton acceptor in catalysis. 2 residues coordinate Zn(2+): Glu154 and Asp177. Residue Arg350 participates in substrate binding. His439 serves as a coordination point for Zn(2+).

The protein belongs to the peptidase M20A family. Requires Zn(2+) as cofactor.

Its subcellular location is the cytoplasm. Its activity is regulated as follows. Fully inhibited by 1,10-phenanthroline or EDTA. In terms of biological role, is a relatively unspecific dipeptidase cleaving a variety of dipeptides, notably those with an N-terminal beta-Ala or D-Ala residue, e.g. carnosine (beta-Ala-His). To a lesser extent, also shows aminopeptidase activity, since it is able to catalyze the removal of the N-terminal amino acid from a few distinct tripeptides. In Lactobacillus delbrueckii subsp. lactis, this protein is Beta-Ala-Xaa dipeptidase (pepV).